The primary structure comprises 294 residues: N-acetylmuramic acid 6-phosphate etherase (294 aa).

The region spanning 54–217 (VIQSFEEEGR…STASMIGVGK (164 aa)) is the SIS domain. Glutamate 82 acts as the Proton donor in catalysis. Glutamate 113 is an active-site residue.

Belongs to the GCKR-like family. MurNAc-6-P etherase subfamily. As to quaternary structure, homodimer.

The enzyme catalyses N-acetyl-D-muramate 6-phosphate + H2O = N-acetyl-D-glucosamine 6-phosphate + (R)-lactate. Its pathway is amino-sugar metabolism; N-acetylmuramate degradation. Its function is as follows. Specifically catalyzes the cleavage of the D-lactyl ether substituent of MurNAc 6-phosphate, producing GlcNAc 6-phosphate and D-lactate. The chain is N-acetylmuramic acid 6-phosphate etherase from Bacillus anthracis (strain A0248).